A 640-amino-acid polypeptide reads, in one-letter code: 5-aminolevulinate synthase, non-specific, mitochondrial (640 aa).

The N-terminal 56 residues, 1–56 (METVVRSCPFLSRVPQAFLQKAGKSLLFYAQNCPKMMEVGAKPAPRALSTAAVHYQ), are a transit peptide targeting the mitochondrion. 2 disordered regions span residues 60–103 (ETPP…TSQG) and 143–163 (EVAE…GGDP). The span at 75 to 92 (VQQTPDGSQQSPDGTQLP) shows a compositional bias: polar residues. Residues R217, S334, and K353 each contribute to the substrate site. S386, H414, and T442 together coordinate pyridoxal 5'-phosphate. The active site involves K445. K445 carries the N6-(pyridoxal phosphate)lysine modification. 2 residues coordinate pyridoxal 5'-phosphate: T474 and T475. T562 is a substrate binding site. Residue P576 is modified to Hydroxyproline.

This sequence belongs to the class-II pyridoxal-phosphate-dependent aminotransferase family. In terms of assembly, homodimer. Interacts (hydroxylated form) with VHL. It depends on pyridoxal 5'-phosphate as a cofactor. In terms of processing, in normoxia, is hydroxylated at Pro-576, promoting interaction with VHL, initiating ubiquitination and subsequent degradation via the proteasome. Ubiquitinated; in normoxia following hydroxylation and interaction with VHL, leading to its subsequent degradation via the proteasome.

It is found in the mitochondrion inner membrane. It catalyses the reaction succinyl-CoA + glycine + H(+) = 5-aminolevulinate + CO2 + CoA. The protein operates within porphyrin-containing compound metabolism; protoporphyrin-IX biosynthesis; 5-aminolevulinate from glycine: step 1/1. Its function is as follows. Catalyzes the pyridoxal 5'-phosphate (PLP)-dependent condensation of succinyl-CoA and glycine to form aminolevulinic acid (ALA), with CoA and CO2 as by-products. This Pongo abelii (Sumatran orangutan) protein is 5-aminolevulinate synthase, non-specific, mitochondrial (ALAS1).